A 133-amino-acid chain; its full sequence is Putative biopolymer transport protein ExbD-like 2 (133 aa).

Residues 1–9 (MKKVESMNV) are Cytoplasmic-facing. The helical transmembrane segment at 10–30 (VPFIDIMLVLLVIVLTTASFV) threads the bilayer. The Periplasmic portion of the chain corresponds to 31–133 (QTSKLPISIP…LVEDKKNQKN (103 aa)).

It belongs to the ExbD/TolR family.

The protein localises to the cell inner membrane. This Helicobacter pylori (strain J99 / ATCC 700824) (Campylobacter pylori J99) protein is Putative biopolymer transport protein ExbD-like 2.